Consider the following 284-residue polypeptide: Diaminopimelate epimerase (284 aa).

Residues N20, Q53, and N73 each contribute to the substrate site. Residue C82 is the Proton donor of the active site. Substrate contacts are provided by residues 83–84 (GN), N167, N200, and 218–219 (ER). The active-site Proton acceptor is the C227. 228–229 (GS) serves as a coordination point for substrate.

The protein belongs to the diaminopimelate epimerase family. In terms of assembly, homodimer.

It is found in the cytoplasm. The catalysed reaction is (2S,6S)-2,6-diaminopimelate = meso-2,6-diaminopimelate. The protein operates within amino-acid biosynthesis; L-lysine biosynthesis via DAP pathway; DL-2,6-diaminopimelate from LL-2,6-diaminopimelate: step 1/1. Functionally, catalyzes the stereoinversion of LL-2,6-diaminopimelate (L,L-DAP) to meso-diaminopimelate (meso-DAP), a precursor of L-lysine and an essential component of the bacterial peptidoglycan. The polypeptide is Diaminopimelate epimerase (Xanthomonas euvesicatoria pv. vesicatoria (strain 85-10) (Xanthomonas campestris pv. vesicatoria)).